The sequence spans 500 residues: Beta-glucosidase 30 (500 aa).

The first 25 residues, 1–25 (MGIRMGRRLLFTLFLGALFCNGVYA), serve as a signal peptide directing secretion. Residue Gln-46 coordinates a beta-D-glucoside. 2 N-linked (GlcNAc...) asparagine glycosylation sites follow: Asn-63 and Asn-114. A beta-D-glucoside contacts are provided by residues His-149 and 194–195 (NE). The active-site Proton donor is the Glu-195. The cysteines at positions 214 and 222 are disulfide-linked. Tyr-338 serves as a coordination point for a beta-D-glucoside. Residue Asn-363 is glycosylated (N-linked (GlcNAc...) asparagine). Glu-409 contacts a beta-D-glucoside. Residue Glu-409 is the Nucleophile of the active site. Residues Asn-416 and Asn-417 are each glycosylated (N-linked (GlcNAc...) asparagine). A beta-D-glucoside contacts are provided by residues Trp-456, 463–464 (EW), and Phe-472.

The protein belongs to the glycosyl hydrolase 1 family.

The catalysed reaction is Hydrolysis of terminal, non-reducing beta-D-glucosyl residues with release of beta-D-glucose.. In Oryza sativa subsp. japonica (Rice), this protein is Beta-glucosidase 30 (BGLU30).